A 325-amino-acid polypeptide reads, in one-letter code: All-trans-nonaprenyl-diphosphate synthase (geranyl-diphosphate specific) (325 aa).

Residues K48, R51, and H81 each contribute to the isopentenyl diphosphate site. Positions 88 and 92 each coordinate Mg(2+). An an all-trans-polyprenyl diphosphate-binding site is contributed by R97. R98 is a binding site for isopentenyl diphosphate. K174, T175, Q211, and K228 together coordinate an all-trans-polyprenyl diphosphate.

It belongs to the FPP/GGPP synthase family. Homodimer. It depends on Mg(2+) as a cofactor.

It catalyses the reaction 7 isopentenyl diphosphate + (2E)-geranyl diphosphate = all-trans-nonaprenyl diphosphate + 7 diphosphate. Its function is as follows. catalyzes the sequential condensation of isopentenyl diphosphate (IPP) with the allylic substrate to give solanesyl diphosphate. Could be important to determine the side chain length of ubiquinone. In Rhodobacter capsulatus (Rhodopseudomonas capsulata), this protein is All-trans-nonaprenyl-diphosphate synthase (geranyl-diphosphate specific) (sdsA).